The sequence spans 229 residues: Protein-lysine N-methyltransferase EFM4 (229 aa).

It belongs to the class I-like SAM-binding methyltransferase superfamily. EFM4 family.

It is found in the cytoplasm. It carries out the reaction L-lysyl-[protein] + S-adenosyl-L-methionine = N(6)-methyl-L-lysyl-[protein] + S-adenosyl-L-homocysteine + H(+). The catalysed reaction is N(6)-methyl-L-lysyl-[protein] + S-adenosyl-L-methionine = N(6),N(6)-dimethyl-L-lysyl-[protein] + S-adenosyl-L-homocysteine + H(+). S-adenosyl-L-methionine-dependent protein-lysine N-methyltransferase that mono- and dimethylates elongation factor 1-alpha (TEF1 and TEF2) at 'Lys-316'. May play a role in intracellular transport. The sequence is that of Protein-lysine N-methyltransferase EFM4 from Saccharomyces cerevisiae (strain ATCC 204508 / S288c) (Baker's yeast).